Reading from the N-terminus, the 160-residue chain is ATP synthase subunit b, chloroplastic (160 aa).

The helical transmembrane segment at 12-31 (NVINIAILVVILIRFARQVV) threads the bilayer.

This sequence belongs to the ATPase B chain family. F-type ATPases have 2 components, F(1) - the catalytic core - and F(0) - the membrane proton channel. F(1) has five subunits: alpha(3), beta(3), gamma(1), delta(1), epsilon(1). F(0) has four main subunits: a(1), b(1), b'(1) and c(10-14). The alpha and beta chains form an alternating ring which encloses part of the gamma chain. F(1) is attached to F(0) by a central stalk formed by the gamma and epsilon chains, while a peripheral stalk is formed by the delta, b and b' chains.

It localises to the plastid. The protein localises to the chloroplast thylakoid membrane. Functionally, f(1)F(0) ATP synthase produces ATP from ADP in the presence of a proton or sodium gradient. F-type ATPases consist of two structural domains, F(1) containing the extramembraneous catalytic core and F(0) containing the membrane proton channel, linked together by a central stalk and a peripheral stalk. During catalysis, ATP synthesis in the catalytic domain of F(1) is coupled via a rotary mechanism of the central stalk subunits to proton translocation. Its function is as follows. Component of the F(0) channel, it forms part of the peripheral stalk, linking F(1) to F(0). In Cyanidioschyzon merolae (strain NIES-3377 / 10D) (Unicellular red alga), this protein is ATP synthase subunit b, chloroplastic.